The sequence spans 664 residues: Glycine--tRNA ligase beta subunit (664 aa).

This sequence belongs to the class-II aminoacyl-tRNA synthetase family. Tetramer of two alpha and two beta subunits.

It is found in the cytoplasm. It catalyses the reaction tRNA(Gly) + glycine + ATP = glycyl-tRNA(Gly) + AMP + diphosphate. This Rickettsia peacockii (strain Rustic) protein is Glycine--tRNA ligase beta subunit.